Consider the following 329-residue polypeptide: Mitochondrial substrate carrier family protein W (329 aa).

Over 1-39 the chain is Mitochondrial intermembrane; it reads MTTNNSNDNNKRYGIIKQQLQQQQQQHHQQHEQHSRLVE. Solcar repeat units follow at residues 34 to 119, 133 to 221, and 231 to 321; these read HSRL…CKEL, ESPL…FKSI, and LGIV…IKKF. Residues 40-60 form a helical membrane-spanning segment; sequence MTAGCGAGFMASLFTTPLDVI. The Mitochondrial matrix segment spans residues 61–90; the sequence is KTTLQVDNSSNKTIMSTVKSILDRKGGVKN. The chain crosses the membrane as a helical span at residues 91-111; that stretch reads LYLGLKPTLVGQIPSWAVYFS. At 112–135 the chain is on the mitochondrial intermembrane side; sequence TYTFCKELFTKENDKHSLLEKESP. The chain crosses the membrane as a helical span at residues 136-156; that stretch reads LIFMTSAIIAGAATSICTSPI. Residues 157–193 are Mitochondrial matrix-facing; that stretch reads WLIKTRFITQEMVGRQKKYRGIVHSMVSIYHEEGFRG. The chain crosses the membrane as a helical span at residues 194–214; that stretch reads LYKGLGPSLLGVLHVGVQFPL. Residues 215–230 are Mitochondrial intermembrane-facing; that stretch reads YEKFKSILKEKNKNKE. A helical membrane pass occupies residues 231–251; it reads LGIVEIMIASSVSKIIASVVA. Topologically, residues 252-296 are mitochondrial matrix; the sequence is YPHEVLRARSQDSSPDSPNRTYRGNIIQMFKQIVREEGWRGLYRG. A helical membrane pass occupies residues 297–315; it reads MGVNLLRVTPSCVITFTSY. The Mitochondrial intermembrane portion of the chain corresponds to 316–329; sequence EYIKKFLSQNQNHF.

Belongs to the mitochondrial carrier (TC 2.A.29) family.

Its subcellular location is the mitochondrion inner membrane. Mitochondrial solute carriers shuttle metabolites, nucleotides, and cofactors through the mitochondrial inner membrane. The sequence is that of Mitochondrial substrate carrier family protein W (mcfW) from Dictyostelium discoideum (Social amoeba).